The primary structure comprises 168 residues: Photosystem I assembly protein Ycf3 (168 aa).

TPR repeat units lie at residues 29–62 (AFSY…EEDP), 66–99 (SYTL…NANL), and 117–150 (AQSL…APDN).

The protein belongs to the Ycf3 family.

It localises to the plastid. The protein localises to the chloroplast thylakoid membrane. Functionally, essential for the assembly of the photosystem I (PSI) complex. May act as a chaperone-like factor to guide the assembly of the PSI subunits. In Phaeodactylum tricornutum (strain CCAP 1055/1), this protein is Photosystem I assembly protein Ycf3.